Here is a 668-residue protein sequence, read N- to C-terminus: Transketolase 2 (668 aa).

His-26 lines the substrate pocket. Residues His-66 and 114–116 (GPL) contribute to the thiamine diphosphate site. Asp-155 contacts Mg(2+). Gly-156 and Asn-185 together coordinate thiamine diphosphate. Asn-185 and Ile-187 together coordinate Mg(2+). Substrate-binding residues include His-261, Arg-358, and Ser-385. Residue His-261 coordinates thiamine diphosphate. Glu-413 (proton donor) is an active-site residue. Residue Phe-439 participates in thiamine diphosphate binding. Positions 463, 471, and 522 each coordinate substrate.

Belongs to the transketolase family. In terms of assembly, homodimer. It depends on Mg(2+) as a cofactor. Ca(2+) serves as cofactor. Mn(2+) is required as a cofactor. The cofactor is Co(2+). Requires thiamine diphosphate as cofactor.

The enzyme catalyses D-sedoheptulose 7-phosphate + D-glyceraldehyde 3-phosphate = aldehydo-D-ribose 5-phosphate + D-xylulose 5-phosphate. Functionally, catalyzes the transfer of a two-carbon ketol group from a ketose donor to an aldose acceptor, via a covalent intermediate with the cofactor thiamine pyrophosphate. This is Transketolase 2 (tktB) from Pasteurella multocida (strain Pm70).